The chain runs to 344 residues: Follistatin (344 aa).

A signal peptide spans 1–29 (MARPRHQPGGLCLLLLLLCQFMEDRSAQA). Residues 30–103 (GNCWLRQAKN…TCENVDCGPG (74 aa)) enclose the TB domain. Cystine bridges form between cysteine 32-cysteine 55, cysteine 42-cysteine 88, cysteine 56-cysteine 91, cysteine 95-cysteine 106, cysteine 100-cysteine 116, cysteine 118-cysteine 150, cysteine 122-cysteine 143, cysteine 132-cysteine 164, cysteine 168-cysteine 179, cysteine 173-cysteine 189, cysteine 192-cysteine 225, cysteine 196-cysteine 218, cysteine 207-cysteine 239, cysteine 245-cysteine 256, cysteine 250-cysteine 267, cysteine 270-cysteine 302, cysteine 274-cysteine 295, and cysteine 284-cysteine 316. Residues 94–117 (TCENVDCGPGKKCRMNKKNKPRCV) form the Follistatin-like 1 domain. A Kazal-like 1 domain is found at 112–166 (NKPRCVCAPDCSNITWKGLVCGLDGKTYRNECALLKARCKEQPELQVQYQGKCKK). An N-linked (GlcNAc...) asparagine glycan is attached at asparagine 124. A Follistatin-like 2 domain is found at 167 to 190 (TCRDVFCPGSSTCVVDQTNNAYCV). The 56-residue stretch at 186–241 (NAYCVTCNRICPEPTSSEQYLCGNDGVTYPSACHLRKATCLLGRSIGLAYEGKCIK) folds into the Kazal-like 2 domain. A Follistatin-like 3 domain is found at 244–268 (SCDDIQCTGGKKCLWDFKVGRGRCS). Residues 261-318 (KVGRGRCSLCGELCPESKSEEPVCASDNATYASECAMKEAACSSGVLLEVKHSGSCNS) form the Kazal-like 3 domain. Residue asparagine 288 is glycosylated (N-linked (GlcNAc...) asparagine). Residues 316–344 (CNSISEDTEDEEEDEDQDYSFPISSILEW) are disordered. Residues 321 to 333 (EDTEDEEEDEDQD) show a composition bias toward acidic residues.

As to quaternary structure, monomer.

It localises to the secreted. Functionally, binds directly to activin and functions as an activin antagonist. Specific inhibitor of the biosynthesis and secretion of pituitary follicle stimulating hormone (FSH). The chain is Follistatin from Bubalus bubalis (Domestic water buffalo).